The chain runs to 304 residues: Sulfate adenylyltransferase subunit 2 (304 aa).

Belongs to the PAPS reductase family. CysD subfamily. As to quaternary structure, heterodimer composed of CysD, the smaller subunit, and CysNC.

It catalyses the reaction sulfate + ATP + H(+) = adenosine 5'-phosphosulfate + diphosphate. It functions in the pathway sulfur metabolism; hydrogen sulfide biosynthesis; sulfite from sulfate: step 1/3. With CysN forms the ATP sulfurylase (ATPS) that catalyzes the adenylation of sulfate producing adenosine 5'-phosphosulfate (APS) and diphosphate, the first enzymatic step in sulfur assimilation pathway. APS synthesis involves the formation of a high-energy phosphoric-sulfuric acid anhydride bond driven by GTP hydrolysis by CysN coupled to ATP hydrolysis by CysD. The protein is Sulfate adenylyltransferase subunit 2 of Xylella fastidiosa (strain Temecula1 / ATCC 700964).